A 203-amino-acid chain; its full sequence is E3 ubiquitin-protein ligase RNF152 (203 aa).

An RING-type zinc finger spans residues 12–55 (CQICFNYYSPRRRPKLLDCKHTCCSVCLQQMRTSQKDLRCPWCR). A helical transmembrane segment spans residues 167-187 (SGVCTVILVACVLVFLLGIVL).

The protein belongs to the RNF152 family.

The protein localises to the lysosome membrane. The catalysed reaction is S-ubiquitinyl-[E2 ubiquitin-conjugating enzyme]-L-cysteine + [acceptor protein]-L-lysine = [E2 ubiquitin-conjugating enzyme]-L-cysteine + N(6)-ubiquitinyl-[acceptor protein]-L-lysine.. Its pathway is protein modification; protein ubiquitination. Functionally, E3 ubiquitin-protein ligase that acts as a negative regulator of mTORC1 signaling by mediating ubiquitination of RagA/RRAGA and RHEB. Catalyzes 'Lys-63'-linked polyubiquitination of RagA/RRAGA in response to amino acid starvation, thereby regulating mTORC1 signaling. Also mediates monoubiquitination of RHEB, promoting its association with the TSC-TBC complex and subsequent inhibition. Also mediates 'Lys-48'-linked polyubiquitination of target proteins and their subsequent targeting to the proteasome for degradation. This is E3 ubiquitin-protein ligase RNF152 from Gallus gallus (Chicken).